A 426-amino-acid chain; its full sequence is Enolase (426 aa).

Gln-163 serves as a coordination point for (2R)-2-phosphoglycerate. Glu-205 functions as the Proton donor in the catalytic mechanism. Positions 242, 286, and 313 each coordinate Mg(2+). Lys-338, Arg-367, Ser-368, and Lys-389 together coordinate (2R)-2-phosphoglycerate. Residue Lys-338 is the Proton acceptor of the active site.

Belongs to the enolase family. The cofactor is Mg(2+).

The protein resides in the cytoplasm. The protein localises to the secreted. It localises to the cell surface. It carries out the reaction (2R)-2-phosphoglycerate = phosphoenolpyruvate + H2O. It functions in the pathway carbohydrate degradation; glycolysis; pyruvate from D-glyceraldehyde 3-phosphate: step 4/5. In terms of biological role, catalyzes the reversible conversion of 2-phosphoglycerate (2-PG) into phosphoenolpyruvate (PEP). It is essential for the degradation of carbohydrates via glycolysis. The sequence is that of Enolase from Gemmatimonas aurantiaca (strain DSM 14586 / JCM 11422 / NBRC 100505 / T-27).